A 325-amino-acid polypeptide reads, in one-letter code: Elongation factor P--(R)-beta-lysine ligase (325 aa).

76–78 lines the substrate pocket; that stretch reads SPE. ATP contacts are provided by residues 100–102 and asparagine 109; that span reads RNE. Substrate is bound at residue tyrosine 118. 244–245 is an ATP binding site; the sequence is EL. Glutamate 251 serves as a coordination point for substrate. Glycine 300 contacts ATP.

The protein belongs to the class-II aminoacyl-tRNA synthetase family. EpmA subfamily. As to quaternary structure, homodimer.

The enzyme catalyses D-beta-lysine + L-lysyl-[protein] + ATP = N(6)-((3R)-3,6-diaminohexanoyl)-L-lysyl-[protein] + AMP + diphosphate + H(+). In terms of biological role, with EpmB is involved in the beta-lysylation step of the post-translational modification of translation elongation factor P (EF-P) on 'Lys-34'. Catalyzes the ATP-dependent activation of (R)-beta-lysine produced by EpmB, forming a lysyl-adenylate, from which the beta-lysyl moiety is then transferred to the epsilon-amino group of EF-P 'Lys-34'. In Salmonella choleraesuis (strain SC-B67), this protein is Elongation factor P--(R)-beta-lysine ligase.